The sequence spans 427 residues: Serine--tRNA ligase (427 aa).

L-serine is bound at residue 235–237 (TAE). ATP is bound by residues 266 to 268 (RRE) and Val-282. Position 289 (Glu-289) interacts with L-serine. 353-356 (EASS) contacts ATP. Ser-389 contributes to the L-serine binding site.

The protein belongs to the class-II aminoacyl-tRNA synthetase family. Type-1 seryl-tRNA synthetase subfamily. In terms of assembly, homodimer. The tRNA molecule binds across the dimer.

It is found in the cytoplasm. It carries out the reaction tRNA(Ser) + L-serine + ATP = L-seryl-tRNA(Ser) + AMP + diphosphate + H(+). It catalyses the reaction tRNA(Sec) + L-serine + ATP = L-seryl-tRNA(Sec) + AMP + diphosphate + H(+). Its pathway is aminoacyl-tRNA biosynthesis; selenocysteinyl-tRNA(Sec) biosynthesis; L-seryl-tRNA(Sec) from L-serine and tRNA(Sec): step 1/1. Functionally, catalyzes the attachment of serine to tRNA(Ser). Is also able to aminoacylate tRNA(Sec) with serine, to form the misacylated tRNA L-seryl-tRNA(Sec), which will be further converted into selenocysteinyl-tRNA(Sec). This Chloroherpeton thalassium (strain ATCC 35110 / GB-78) protein is Serine--tRNA ligase.